The following is a 99-amino-acid chain: Malonate decarboxylase acyl carrier protein (99 aa).

Residue serine 25 is modified to O-(phosphoribosyl dephospho-coenzyme A)serine.

Belongs to the MdcC family. Covalently binds the prosthetic group of malonate decarboxylase.

The protein resides in the cytoplasm. Its function is as follows. Subunit of malonate decarboxylase, it is an acyl carrier protein to which acetyl and malonyl thioester residues are bound via a 2'-(5''-phosphoribosyl)-3'-dephospho-CoA prosthetic group and turn over during the catalytic mechanism. The polypeptide is Malonate decarboxylase acyl carrier protein (Pseudomonas fluorescens (strain SBW25)).